The chain runs to 124 residues: Large ribosomal subunit protein bL12 (124 aa).

The protein belongs to the bacterial ribosomal protein bL12 family. In terms of assembly, homodimer. Part of the ribosomal stalk of the 50S ribosomal subunit. Forms a multimeric L10(L12)X complex, where L10 forms an elongated spine to which 2 to 4 L12 dimers bind in a sequential fashion. Binds GTP-bound translation factors.

In terms of biological role, forms part of the ribosomal stalk which helps the ribosome interact with GTP-bound translation factors. Is thus essential for accurate translation. In Xanthobacter autotrophicus (strain ATCC BAA-1158 / Py2), this protein is Large ribosomal subunit protein bL12.